Reading from the N-terminus, the 443-residue chain is ATP-dependent protease ATPase subunit HslU (443 aa).

ATP-binding positions include isoleucine 20, glycine 62–glutamate 67, aspartate 255, glutamate 321, and arginine 393.

This sequence belongs to the ClpX chaperone family. HslU subfamily. A double ring-shaped homohexamer of HslV is capped on each side by a ring-shaped HslU homohexamer. The assembly of the HslU/HslV complex is dependent on binding of ATP.

Its subcellular location is the cytoplasm. Its function is as follows. ATPase subunit of a proteasome-like degradation complex; this subunit has chaperone activity. The binding of ATP and its subsequent hydrolysis by HslU are essential for unfolding of protein substrates subsequently hydrolyzed by HslV. HslU recognizes the N-terminal part of its protein substrates and unfolds these before they are guided to HslV for hydrolysis. The sequence is that of ATP-dependent protease ATPase subunit HslU from Helicobacter pylori (strain Shi470).